Reading from the N-terminus, the 375-residue chain is 23S rRNA (uracil(747)-C(5))-methyltransferase RlmC (375 aa).

4 residues coordinate [4Fe-4S] cluster: Cys-3, Cys-11, Cys-14, and Cys-87. Positions 212, 241, 262, and 307 each coordinate S-adenosyl-L-methionine. The Nucleophile role is filled by Cys-334.

Belongs to the class I-like SAM-binding methyltransferase superfamily. RNA M5U methyltransferase family. RlmC subfamily.

It carries out the reaction uridine(747) in 23S rRNA + S-adenosyl-L-methionine = 5-methyluridine(747) in 23S rRNA + S-adenosyl-L-homocysteine + H(+). Functionally, catalyzes the formation of 5-methyl-uridine at position 747 (m5U747) in 23S rRNA. The polypeptide is 23S rRNA (uracil(747)-C(5))-methyltransferase RlmC (Yersinia enterocolitica serotype O:8 / biotype 1B (strain NCTC 13174 / 8081)).